Reading from the N-terminus, the 212-residue chain is Ribosomal RNA small subunit methyltransferase G (212 aa).

S-adenosyl-L-methionine is bound by residues G72, L77, 123 to 124 (VE), and R138.

The protein belongs to the methyltransferase superfamily. RNA methyltransferase RsmG family.

It localises to the cytoplasm. It catalyses the reaction guanosine(527) in 16S rRNA + S-adenosyl-L-methionine = N(7)-methylguanosine(527) in 16S rRNA + S-adenosyl-L-homocysteine. In terms of biological role, specifically methylates the N7 position of guanine in position 527 of 16S rRNA. The sequence is that of Ribosomal RNA small subunit methyltransferase G from Histophilus somni (strain 2336) (Haemophilus somnus).